A 365-amino-acid polypeptide reads, in one-letter code: Putative agmatine deiminase (365 aa).

Cys-357 acts as the Amidino-cysteine intermediate in catalysis.

This sequence belongs to the agmatine deiminase family.

It catalyses the reaction agmatine + H2O = N-carbamoylputrescine + NH4(+). The protein is Putative agmatine deiminase of Yersinia pseudotuberculosis serotype O:1b (strain IP 31758).